The sequence spans 335 residues: Pyruvate dehydrogenase E1 component subunit beta (335 aa).

E60 contributes to the thiamine diphosphate binding site. Positions 161, 162, and 166 each coordinate K(+).

In terms of assembly, heterodimer of an alpha and a beta chain. Thiamine diphosphate is required as a cofactor.

The protein resides in the plastid. It is found in the chloroplast. It carries out the reaction N(6)-[(R)-lipoyl]-L-lysyl-[protein] + pyruvate + H(+) = N(6)-[(R)-S(8)-acetyldihydrolipoyl]-L-lysyl-[protein] + CO2. The pyruvate dehydrogenase complex catalyzes the overall conversion of pyruvate to acetyl-CoA and CO(2). It contains multiple copies of three enzymatic components: pyruvate dehydrogenase (E1), dihydrolipoamide acetyltransferase (E2) and lipoamide dehydrogenase (E3). This Chlorokybus atmophyticus (Soil alga) protein is Pyruvate dehydrogenase E1 component subunit beta (pdhB).